A 91-amino-acid polypeptide reads, in one-letter code: UPF0512 protein F (91 aa).

Belongs to the UPF0512 family.

The chain is UPF0512 protein F from Dictyostelium discoideum (Social amoeba).